Consider the following 379-residue polypeptide: Inactive 2'-5'-oligoadenylate synthase 1B (379 aa).

Residues 1-355 are Cytoplasmic-facing; the sequence is MEQELRSIPA…VPTEVDIPSQ (355 aa). The helical; Anchor for type IV membrane protein transmembrane segment at 356–374 threads the bilayer; that stretch reads NYFFHIICLIFWLLLRLIF. Residues 375–379 are Extracellular-facing; sequence GKHSV.

It belongs to the 2-5A synthase family. In terms of assembly, interacts with OSBPL1A and ABCF3. As to expression, highly expressed in the brain, liver, spleen and heart.

Its subcellular location is the endoplasmic reticulum membrane. In terms of biological role, does not have 2'-5'-OAS activity, but can bind double-stranded RNA. Displays antiviral activity against viruses via an alternative antiviral pathway independent of RNase L. This chain is Inactive 2'-5'-oligoadenylate synthase 1B (Oas1b), found in Rattus norvegicus (Rat).